The chain runs to 343 residues: tRNA N6-adenosine threonylcarbamoyltransferase (343 aa).

Residues His116 and His120 each contribute to the Fe cation site. Residues 139 to 143 (TVSGG), Asp172, Gly185, Asp189, and Asn280 contribute to the substrate site. Asp308 provides a ligand contact to Fe cation.

It belongs to the KAE1 / TsaD family. Fe(2+) is required as a cofactor.

Its subcellular location is the cytoplasm. The catalysed reaction is L-threonylcarbamoyladenylate + adenosine(37) in tRNA = N(6)-L-threonylcarbamoyladenosine(37) in tRNA + AMP + H(+). Required for the formation of a threonylcarbamoyl group on adenosine at position 37 (t(6)A37) in tRNAs that read codons beginning with adenine. Is involved in the transfer of the threonylcarbamoyl moiety of threonylcarbamoyl-AMP (TC-AMP) to the N6 group of A37, together with TsaE and TsaB. TsaD likely plays a direct catalytic role in this reaction. The polypeptide is tRNA N6-adenosine threonylcarbamoyltransferase (Cytophaga hutchinsonii (strain ATCC 33406 / DSM 1761 / CIP 103989 / NBRC 15051 / NCIMB 9469 / D465)).